The chain runs to 276 residues: Octanoyltransferase LipM (276 aa).

The BPL/LPL catalytic domain maps to 31-246 (GLIPPVIRFY…GFAKSLQIEL (216 aa)). Cys148 serves as the catalytic Acyl-thioester intermediate.

This sequence belongs to the octanoyltransferase LipM family. Monomer.

The enzyme catalyses octanoyl-[ACP] + L-lysyl-[protein] = N(6)-octanoyl-L-lysyl-[protein] + holo-[ACP] + H(+). It participates in protein modification; protein lipoylation via endogenous pathway; protein N(6)-(lipoyl)lysine from octanoyl-[acyl-carrier-protein]. In terms of biological role, catalyzes the transfer of endogenously produced octanoic acid from octanoyl-acyl-carrier-protein onto the lipoyl domain of GcvH, an intermediate carrier during protein lipoylation. The chain is Octanoyltransferase LipM from Lysinibacillus sphaericus (strain C3-41).